A 397-amino-acid polypeptide reads, in one-letter code: Serine protease MT3772 (397 aa).

4 helical membrane-spanning segments follow: residues 9 to 29 (IAVLAVAFIAAISGWRAGALG), 32 to 52 (LSFGGVLLGATAGVLLAPHIV), 62 to 82 (LFAALFLILALVVVGEVAGVV), and 102 to 122 (VIGVGVQLVVVLTAAWLLAMP). An intrachain disulfide couples Cys-214 to Cys-395. His-235 serves as the catalytic Proton acceptor. Asp-264 is a catalytic residue. Ser-343 functions as the Charge relay system in the catalytic mechanism.

It belongs to the peptidase S1C family. As to quaternary structure, monomer.

Its subcellular location is the membrane. Functionally, required for M.tuberculosis resistance to oxidative stress in addition to its role in resistance to acid, which is essential for virulence. The polypeptide is Serine protease MT3772 (Mycobacterium tuberculosis (strain CDC 1551 / Oshkosh)).